Consider the following 241-residue polypeptide: ATP synthase subunit a (241 aa).

5 helical membrane passes run 30–50, 91–111, 128–148, 193–213, and 214–234; these read GQVF…VVVG, FIGT…LVPW, INTT…AGLS, LVVA…VMFL, and GLFT…YYIG.

Belongs to the ATPase A chain family. F-type ATPases have 2 components, CF(1) - the catalytic core - and CF(0) - the membrane proton channel. CF(1) has five subunits: alpha(3), beta(3), gamma(1), delta(1), epsilon(1). CF(0) has four main subunits: a, b, b' and c.

The protein localises to the cellular thylakoid membrane. In terms of biological role, key component of the proton channel; it plays a direct role in the translocation of protons across the membrane. In Prochlorococcus marinus (strain MIT 9303), this protein is ATP synthase subunit a.